Reading from the N-terminus, the 340-residue chain is Glycerol-3-phosphate dehydrogenase [NAD(P)+] (340 aa).

NADPH is bound by residues S14, F15, R35, and K108. Residues K108 and G136 each coordinate sn-glycerol 3-phosphate. Residue A140 participates in NADPH binding. The sn-glycerol 3-phosphate site is built by K191, D244, S254, R255, and N256. K191 functions as the Proton acceptor in the catalytic mechanism. R255 contributes to the NADPH binding site. NADPH-binding residues include V279 and E281.

The protein belongs to the NAD-dependent glycerol-3-phosphate dehydrogenase family.

The protein resides in the cytoplasm. The enzyme catalyses sn-glycerol 3-phosphate + NAD(+) = dihydroxyacetone phosphate + NADH + H(+). It carries out the reaction sn-glycerol 3-phosphate + NADP(+) = dihydroxyacetone phosphate + NADPH + H(+). It participates in membrane lipid metabolism; glycerophospholipid metabolism. In terms of biological role, catalyzes the reduction of the glycolytic intermediate dihydroxyacetone phosphate (DHAP) to sn-glycerol 3-phosphate (G3P), the key precursor for phospholipid synthesis. In Ectopseudomonas mendocina (strain ymp) (Pseudomonas mendocina), this protein is Glycerol-3-phosphate dehydrogenase [NAD(P)+].